Consider the following 336-residue polypeptide: Glyceraldehyde-3-phosphate dehydrogenase (336 aa).

Residues 12–13 (RI), D35, R79, and S121 contribute to the NAD(+) site. D-glyceraldehyde 3-phosphate is bound by residues 152 to 154 (SCT) and T183. The Nucleophile role is filled by C153. N184 lines the NAD(+) pocket. D-glyceraldehyde 3-phosphate-binding positions include R198, 211–212 (TG), and R234. Residue N317 participates in NAD(+) binding.

Belongs to the glyceraldehyde-3-phosphate dehydrogenase family. In terms of assembly, homotetramer.

The protein resides in the cytoplasm. It carries out the reaction D-glyceraldehyde 3-phosphate + phosphate + NAD(+) = (2R)-3-phospho-glyceroyl phosphate + NADH + H(+). It functions in the pathway carbohydrate degradation; glycolysis; pyruvate from D-glyceraldehyde 3-phosphate: step 1/5. Its activity is regulated as follows. Resistant to pentalenolactone. Functionally, catalyzes the oxidative phosphorylation of glyceraldehyde 3-phosphate (G3P) to 1,3-bisphosphoglycerate (BPG) using the cofactor NAD. The first reaction step involves the formation of a hemiacetal intermediate between G3P and a cysteine residue, and this hemiacetal intermediate is then oxidized to a thioester, with concomitant reduction of NAD to NADH. The reduced NADH is then exchanged with the second NAD, and the thioester is attacked by a nucleophilic inorganic phosphate to produce BPG. In Streptomyces coelicolor (strain ATCC BAA-471 / A3(2) / M145), this protein is Glyceraldehyde-3-phosphate dehydrogenase (gap).